A 300-amino-acid chain; its full sequence is Nucleotide-binding protein MCCL_0516 (300 aa).

15–22 contributes to the ATP binding site; sequence GMSGAGKS. 66–69 lines the GTP pocket; it reads DLRG.

This sequence belongs to the RapZ-like family.

In terms of biological role, displays ATPase and GTPase activities. In Macrococcus caseolyticus (strain JCSC5402) (Macrococcoides caseolyticum), this protein is Nucleotide-binding protein MCCL_0516.